A 468-amino-acid chain; its full sequence is MTHEEIKGKRCAIIGGKRSGIAAAKLLSRAGAYVFLSEKSVPENQATLESDLRAHGIECEFGQHSEEVFDADFAIISPGVPSSAPVIKQLERAQVPVYSEIELASWFCKAKIIAITGTDGKTTVTTLTKKIFEADGNENGYHAYALGNIGQPFSDTVESLSENDVAVIEISSFQLEHCTSFRPNVTVITNITPDHLDRYDGNIQKYAAAKYRIYQNQTASDWLIYNDDNEILHQHFTDPERRASLPMKLVALSLEKNLGDEYEHCAYKENGRLVLKLTNEKEWLIEENQISTKQFRGQHNIYNALTAAAAASALGIDKKFIEKSILSFEGVEHRLEFVRAVNQVDYINDSKATTVNALWYALDTVTPKIVLIAGGRDKGNDYTKVFSFVKEKVRAVVAIGESQEKVVQAFGNLTKVMKAFSLDEAVRLASQEAEAGDTVLLSPACASFDMFSNFETRGKLFKEAVMNL.

An ATP-binding site is contributed by Gly-117–Thr-123.

The protein belongs to the MurCDEF family.

The protein localises to the cytoplasm. It carries out the reaction UDP-N-acetyl-alpha-D-muramoyl-L-alanine + D-glutamate + ATP = UDP-N-acetyl-alpha-D-muramoyl-L-alanyl-D-glutamate + ADP + phosphate + H(+). The protein operates within cell wall biogenesis; peptidoglycan biosynthesis. Its function is as follows. Cell wall formation. Catalyzes the addition of glutamate to the nucleotide precursor UDP-N-acetylmuramoyl-L-alanine (UMA). The protein is UDP-N-acetylmuramoylalanine--D-glutamate ligase of Chloroherpeton thalassium (strain ATCC 35110 / GB-78).